The following is a 930-amino-acid chain: Translation initiation factor IF-2 (930 aa).

Residues 50–67 (FKPAAAPKVEAKPAAPKV) are compositionally biased toward low complexity. Disordered regions lie at residues 50-217 (FKPA…SSEE) and 260-346 (EVVP…HELP). Composition is skewed to basic and acidic residues over residues 68–90 (SAEK…EAKP) and 110–125 (FKAE…AERR). Positions 129–141 (KGNNRDQQQNGNR) are enriched in low complexity. Basic and acidic residues-rich tracts occupy residues 157–167 (RDNRRFNDQAK) and 262–295 (VPEK…DGPR). Residues 309–318 (NQKNSNWNNN) show a composition bias toward low complexity. Residues 337 to 346 (VTERKFHELP) show a composition bias toward basic and acidic residues. Residues 432–599 (ERPPVVTIMG…TVLLVAEIQE (168 aa)) form the tr-type G domain. The G1 stretch occupies residues 441–448 (GHVDHGKT). Position 441 to 448 (441 to 448 (GHVDHGKT)) interacts with GTP. The segment at 466 to 470 (GITQH) is G2. Residues 487-490 (DTPG) form a G3 region. GTP is bound by residues 487–491 (DTPGH) and 541–544 (NKID). The G4 stretch occupies residues 541–544 (NKID). The interval 577–579 (SAK) is G5.

The protein belongs to the TRAFAC class translation factor GTPase superfamily. Classic translation factor GTPase family. IF-2 subfamily.

The protein localises to the cytoplasm. Functionally, one of the essential components for the initiation of protein synthesis. Protects formylmethionyl-tRNA from spontaneous hydrolysis and promotes its binding to the 30S ribosomal subunits. Also involved in the hydrolysis of GTP during the formation of the 70S ribosomal complex. This Streptococcus pneumoniae (strain P1031) protein is Translation initiation factor IF-2.